Consider the following 632-residue polypeptide: Tail spike protein (632 aa).

A Peptidase S74 domain is found at 505–630; the sequence is SDARCKTEPL…KRMQEALAAL (126 aa).

As to quaternary structure, homotrimer. Proteolytic cleavage and release of the chaperone in the host cytosol stabilizes the folded protein. The cleavage gives rise to the mature tail spike protein but is not essential for catalytic activity.

The protein resides in the virion. In terms of biological role, functions as a receptor binding protein (RBP) and probably mediates the attachment to the host capsular exopolysaccharides. Displays a depolymerase activity that specifically degrades the K5-type polysaccharides of Escherichia coli capsule. Functionally, the C-terminal chaperone protein mediates homotrimerization and proper folding of the catalytic trimer. The protein is Tail spike protein (kflA) of Escherichia virus K5 (Bacteriophage K5).